The sequence spans 330 residues: Phosphate acyltransferase (330 aa).

This sequence belongs to the PlsX family. Homodimer. Probably interacts with PlsY.

The protein localises to the cytoplasm. The catalysed reaction is a fatty acyl-[ACP] + phosphate = an acyl phosphate + holo-[ACP]. The protein operates within lipid metabolism; phospholipid metabolism. Functionally, catalyzes the reversible formation of acyl-phosphate (acyl-PO(4)) from acyl-[acyl-carrier-protein] (acyl-ACP). This enzyme utilizes acyl-ACP as fatty acyl donor, but not acyl-CoA. The polypeptide is Phosphate acyltransferase (Streptococcus pneumoniae (strain JJA)).